We begin with the raw amino-acid sequence, 2304 residues long: Protein Ycf2 (2304 aa).

1637 to 1644 (GSIGTGRS) serves as a coordination point for ATP.

It belongs to the Ycf2 family.

It localises to the plastid. The protein resides in the chloroplast stroma. Its function is as follows. Probable ATPase of unknown function. Its presence in a non-photosynthetic plant (Epifagus virginiana) and experiments in tobacco indicate that it has an essential function which is probably not related to photosynthesis. This chain is Protein Ycf2, found in Amborella trichopoda.